A 257-amino-acid polypeptide reads, in one-letter code: Imidazole glycerol phosphate synthase subunit HisF (257 aa).

Residues D11 and D130 contribute to the active site.

Belongs to the HisA/HisF family. In terms of assembly, heterodimer of HisH and HisF.

The protein localises to the cytoplasm. The enzyme catalyses 5-[(5-phospho-1-deoxy-D-ribulos-1-ylimino)methylamino]-1-(5-phospho-beta-D-ribosyl)imidazole-4-carboxamide + L-glutamine = D-erythro-1-(imidazol-4-yl)glycerol 3-phosphate + 5-amino-1-(5-phospho-beta-D-ribosyl)imidazole-4-carboxamide + L-glutamate + H(+). It participates in amino-acid biosynthesis; L-histidine biosynthesis; L-histidine from 5-phospho-alpha-D-ribose 1-diphosphate: step 5/9. IGPS catalyzes the conversion of PRFAR and glutamine to IGP, AICAR and glutamate. The HisF subunit catalyzes the cyclization activity that produces IGP and AICAR from PRFAR using the ammonia provided by the HisH subunit. The polypeptide is Imidazole glycerol phosphate synthase subunit HisF (Shewanella piezotolerans (strain WP3 / JCM 13877)).